The following is a 967-amino-acid chain: Probable disease resistance protein At1g61190 (967 aa).

Positions 20 to 68 (RCLCGKGYIRNLEKNLRALQREMEDLRATQHEVQNKVAREESRHQQRLE) form a coiled coil. The disordered stretch occupies residues 132 to 153 (GNFDEVSQPPPRSEVEERPTQP). In terms of domain architecture, NB-ARC spans 138–441 (SQPPPRSEVE…CEGFIGEDQV (304 aa)). 180–187 (GMGGVGKT) provides a ligand contact to ATP. LRR repeat units lie at residues 516–537 (AVRRMSLMMNEIEEITCESKCS), 538–559 (ELTTLFLQSNQLKNLSGEFIRY), 562–585 (KLVVLDLSHNPDFNELPEQISGLV), 586–608 (SLQYLDLSWTRIEQLPVGLKELK), and 609–631 (KLIFLNLCFTERLCSISGISRLL).

This sequence belongs to the disease resistance NB-LRR family.

Functionally, probable disease resistance protein. The sequence is that of Probable disease resistance protein At1g61190 from Arabidopsis thaliana (Mouse-ear cress).